Consider the following 905-residue polypeptide: Microtubule-associated protein 10 (905 aa).

Disordered regions lie at residues 30 to 51 (AAAV…SSPR), 199 to 235 (TRTG…KPLG), 329 to 362 (APEE…AHEH), 434 to 458 (SPES…GGCE), 547 to 586 (SSAE…FDEP), 721 to 772 (RSFK…GSPV), and 786 to 855 (KSLE…SSYL). Acidic residues predominate over residues 34 to 43 (EQEEEEEEKE). The segment covering 208–227 (SPQTQQERQQLQQPASQPSP) has biased composition (low complexity). Over residues 443-453 (CRSEAKKDKRS) the composition is skewed to basic and acidic residues. Residues 567–579 (ASFTENSDTSRQI) show a composition bias toward polar residues. Residues 721-736 (RSFKAHDSSSRTENPK) are compositionally biased toward basic and acidic residues. Residues 737 to 748 (HSQYTSKSSDTG) show a composition bias toward polar residues. Low complexity predominate over residues 790–801 (EASSISASDLSS). Polar residues predominate over residues 830 to 855 (SVKTRSSWKSLEKSQSPQTSQVSSYL).

In terms of assembly, interacts (via middle region) with microtubules. In terms of tissue distribution, expressed in different cell lines (at protein level).

It is found in the cytoplasm. The protein resides in the cytoskeleton. It localises to the spindle pole. Its subcellular location is the microtubule organizing center. The protein localises to the centrosome. It is found in the midbody. In terms of biological role, microtubule-associated protein (MAP) that plays a role in the regulation of cell division; promotes microtubule stability and participates in the organization of the spindle midzone and normal progress of cytokinesis. This chain is Microtubule-associated protein 10 (MAP10), found in Homo sapiens (Human).